The primary structure comprises 1123 residues: Phytochrome 1 (1123 aa).

Residues 1-15 (MSTPKKTYSSTSSAK) are compositionally biased toward low complexity. A disordered region spans residues 1–20 (MSTPKKTYSSTSSAKSKAHS). A GAF domain is found at 216-395 (DIGLLCDTVV…VFGLQLNMEV (180 aa)). Cysteine 321 serves as a coordination point for phytochromobilin. 2 PAS domains span residues 610-681 (VANE…LRGE) and 744-815 (DYKT…TKFM). The Histidine kinase domain occupies 895 to 1115 (YIRQEIKNPL…VVNVELPMAQ (221 aa)).

Belongs to the phytochrome family. In terms of assembly, homodimer. Contains one covalently linked phytochromobilin chromophore.

Its subcellular location is the cytoplasm. Regulatory photoreceptor which exists in two forms that are reversibly interconvertible by light: the Pr form that absorbs maximally in the red region of the spectrum and the Pfr form that absorbs maximally in the far-red region. Photoconversion of Pr to Pfr induces an array of morphogenetic responses, whereas reconversion of Pfr to Pr cancels the induction of those responses. Pfr controls the expression of a number of nuclear genes including those encoding the small subunit of ribulose-bisphosphate carboxylase, chlorophyll A/B binding protein, protochlorophyllide reductase, rRNA, etc. It also controls the expression of its own gene(s) in a negative feedback fashion. Mediates chloroplast avoidance movement in cytoplasm. This chain is Phytochrome 1 (PHY1), found in Physcomitrium patens (Spreading-leaved earth moss).